The chain runs to 757 residues: Probable serine/threonine-protein kinase pknA2 (757 aa).

Positions 14–274 (YRIVRNIAEG…DGAAAAEELS (261 aa)) constitute a Protein kinase domain. ATP is bound by residues 20 to 28 (IAEGGMATV) and Lys43. The active-site Proton acceptor is Asp140. The segment at 344–387 (DTGGAADVNPPAPPVAPTTALDSSTPADASAPHKTQIMAQSGSE) is disordered. PASTA domains lie at 466–539 (DANA…VVSK), 545–614 (TIPK…TLSK), and 615–681 (GPMP…VISK).

The protein belongs to the protein kinase superfamily. Ser/Thr protein kinase family.

The catalysed reaction is L-seryl-[protein] + ATP = O-phospho-L-seryl-[protein] + ADP + H(+). It catalyses the reaction L-threonyl-[protein] + ATP = O-phospho-L-threonyl-[protein] + ADP + H(+). In Bifidobacterium longum (strain NCC 2705), this protein is Probable serine/threonine-protein kinase pknA2 (pknA2).